We begin with the raw amino-acid sequence, 134 residues long: Large ribosomal subunit protein uL22 (134 aa).

Belongs to the universal ribosomal protein uL22 family. In terms of assembly, part of the 50S ribosomal subunit. Contacts protein L32.

In terms of biological role, this protein binds specifically to 23S rRNA; its binding is stimulated by other ribosomal proteins, e.g. L4, L17, and L20. It is important during the early stages of 50S assembly. It makes multiple contacts with different domains of the 23S rRNA in the assembled 50S subunit and ribosome. Functionally, the globular domain of the protein is located by the polypeptide exit tunnel on the outside of the subunit while an extended beta-hairpin forms part of the wall of the tunnel. Forms a pair of 'tweezers' with L32 that hold together two different domains of the 23S rRNA. Interacts with the tunnel-blocking modified macrolide azithromycin. Upon binding of the macrolide troleadomycin to the ribosome, the tip of the beta-hairpin is displaced, which severely restricts the tunnel. This and experiments in E.coli have led to the suggestion that it is part of the gating mechanism involved in translation arrest in the absence of the protein export system. The polypeptide is Large ribosomal subunit protein uL22 (rplV) (Deinococcus radiodurans (strain ATCC 13939 / DSM 20539 / JCM 16871 / CCUG 27074 / LMG 4051 / NBRC 15346 / NCIMB 9279 / VKM B-1422 / R1)).